Consider the following 194-residue polypeptide: Protein GrpE (194 aa).

Over residues M1–P12 the composition is skewed to basic and acidic residues. A disordered region spans residues M1–V44.

This sequence belongs to the GrpE family. In terms of assembly, homodimer.

It is found in the cytoplasm. In terms of biological role, participates actively in the response to hyperosmotic and heat shock by preventing the aggregation of stress-denatured proteins, in association with DnaK and GrpE. It is the nucleotide exchange factor for DnaK and may function as a thermosensor. Unfolded proteins bind initially to DnaJ; upon interaction with the DnaJ-bound protein, DnaK hydrolyzes its bound ATP, resulting in the formation of a stable complex. GrpE releases ADP from DnaK; ATP binding to DnaK triggers the release of the substrate protein, thus completing the reaction cycle. Several rounds of ATP-dependent interactions between DnaJ, DnaK and GrpE are required for fully efficient folding. This Porphyromonas gingivalis (strain ATCC BAA-308 / W83) protein is Protein GrpE.